A 264-amino-acid polypeptide reads, in one-letter code: tRNA pseudouridine synthase A (264 aa).

Residue aspartate 51 is the Nucleophile of the active site. Tyrosine 109 lines the substrate pocket.

The protein belongs to the tRNA pseudouridine synthase TruA family. Homodimer.

The enzyme catalyses uridine(38/39/40) in tRNA = pseudouridine(38/39/40) in tRNA. Functionally, formation of pseudouridine at positions 38, 39 and 40 in the anticodon stem and loop of transfer RNAs. In Vibrio cholerae serotype O1 (strain ATCC 39541 / Classical Ogawa 395 / O395), this protein is tRNA pseudouridine synthase A.